The sequence spans 150 residues: Arginine repressor (150 aa).

This sequence belongs to the ArgR family.

Its subcellular location is the cytoplasm. The protein operates within amino-acid biosynthesis; L-arginine biosynthesis [regulation]. In terms of biological role, regulates arginine biosynthesis genes. The chain is Arginine repressor from Staphylococcus haemolyticus (strain JCSC1435).